A 63-amino-acid polypeptide reads, in one-letter code: Cytotoxin homolog S3C2 (63 aa).

4 cysteine pairs are disulfide-bonded: Cys3–Cys22, Cys15–Cys40, Cys44–Cys55, and Cys56–Cys61.

The protein belongs to the three-finger toxin family. Short-chain subfamily. Orphan group XVI sub-subfamily. Expressed by the venom gland.

The protein resides in the secreted. The protein is Cytotoxin homolog S3C2 of Aspidelaps scutatus (Shield-nose snake).